The primary structure comprises 288 residues: Glutamate racemase (288 aa).

The interval 1–21 is disordered; the sequence is MAIARQDVNISSPEATTSDAQ. Positions 8–21 are enriched in polar residues; the sequence is VNISSPEATTSDAQ. Substrate contacts are provided by residues 32–33 and 64–65; these read DS and YG. C96 acts as the Proton donor/acceptor in catalysis. 97 to 98 is a substrate binding site; that stretch reads NT. The active-site Proton donor/acceptor is the C209. 210 to 211 contacts substrate; the sequence is TH.

This sequence belongs to the aspartate/glutamate racemases family.

It catalyses the reaction L-glutamate = D-glutamate. The protein operates within cell wall biogenesis; peptidoglycan biosynthesis. Functionally, provides the (R)-glutamate required for cell wall biosynthesis. This is Glutamate racemase from Proteus mirabilis (strain HI4320).